Reading from the N-terminus, the 84-residue chain is Exendin-2-long (84 aa).

The signal sequence occupies residues 1–23 (MKSILWLCVFGLLIATLFPVSWQ). Positions 24-44 (MAIKSRLSSEDSETDQRLFES) are excised as a propeptide.

The protein belongs to the glucagon family. Post-translationally, an amidated Pro-81 is described. Such an amidation is however not compatible with the sequence displayed. Indeed cDNAs do not encode a Gly that could serve as substrate for peptide alpha-amidation. As to expression, expressed by the venom gland. Not expressed in the pancreas, liver, stomach, small intestine, lung, heart, kidney, spleen, ovary, and brain.

Its subcellular location is the secreted. Its function is as follows. Has vasoactive intestinal peptide(VIP)/secretin-like biological activity. Interacts with rat and human VIP receptors 1 (VIPR1) and 2 (VIPR2), with the highest affinity for the human VIPR2. Induces hypotension that is mediated by relaxation of cardiac smooth muscle. This vasodilation may not be transduced by VIP or PACAP receptors. The sequence is that of Exendin-2-long from Heloderma suspectum (Gila monster).